Consider the following 215-residue polypeptide: Protein-L-isoaspartate O-methyltransferase (215 aa).

S62 is an active-site residue.

It belongs to the methyltransferase superfamily. L-isoaspartyl/D-aspartyl protein methyltransferase family.

It localises to the cytoplasm. It carries out the reaction [protein]-L-isoaspartate + S-adenosyl-L-methionine = [protein]-L-isoaspartate alpha-methyl ester + S-adenosyl-L-homocysteine. In terms of biological role, catalyzes the methyl esterification of L-isoaspartyl residues in peptides and proteins that result from spontaneous decomposition of normal L-aspartyl and L-asparaginyl residues. It plays a role in the repair and/or degradation of damaged proteins. This Bradyrhizobium sp. (strain BTAi1 / ATCC BAA-1182) protein is Protein-L-isoaspartate O-methyltransferase.